Consider the following 523-residue polypeptide: Calcium uptake protein 3, mitochondrial (523 aa).

A mitochondrion-targeting transit peptide spans 1-6; the sequence is MAALRR. Residues 18–48 form a disordered region; sequence LAPQQPFLSPWGRPAGTAPGMSGRPFSGREE. An EF-hand 1 domain is found at 225 to 260; it reads KPHAGFRIAFNMFDTDGNEMVDKKEFLVLQEIFRKK. Residues Asp238, Asp240, Asn242, Met244, Asp246, and Glu249 each contribute to the Ca(2+) site. The region spanning 414-429 is the EF-hand 2; degenerate domain; it reads ITFDEFRSFFQFLNNL. The region spanning 463–498 is the EF-hand 3 domain; the sequence is LSPHLVNTVFKIFDVDKDDQLSYKEFIGIMKDRLHR. Residues Asp476, Asp478, Asp480, Gln482, and Glu487 each contribute to the Ca(2+) site.

Belongs to the MICU1 family. MICU3 subfamily. In terms of assembly, heterodimer; disulfide-linked; heterodimerizes with MICU1. Component of the uniplex complex, composed of MCU, EMRE/SMDT1, MICU1 and MICU3 in a 4:4:1:1 stoichiometry.

It is found in the mitochondrion intermembrane space. The protein localises to the mitochondrion inner membrane. Its function is as follows. Tissue-specific calcium sensor of the mitochondrial calcium uniporter (MCU) channel, which specifically regulates MCU channel activity in the central nervous system and skeletal muscle. Senses calcium level via its EF-hand domains: compared to MICU1 and MICU2, MICU3 has a higher affinity for calcium. MICU1 and MICU3 form a disulfide-linked heterodimer that stimulates and inhibits MCU activity, depending on the concentration of calcium. At low calcium levels, MICU1 occludes the pore of the MCU channel, preventing mitochondrial calcium uptake. At higher calcium levels, calcium-binding to MICU1 and MICU3 induces a conformational change that weakens MCU-MICU1 interactions and moves the MICU1-MICU3 heterodimer away from the pore, allowing calcium permeation through the MCU channel. The high calcium affinity of MICU3 lowers the calcium threshold necessary for calcium permeation through the MCU channel. The MICU1-MICU3 heterodimer promotes flexibility of neurotransmission in neuronal cells by enhancing mitochondrial calcium uptake in presynapses. It is also required to increase mitochondrial calcium uptake in skeletal muscle cells, thereby increasing ATP production. This is Calcium uptake protein 3, mitochondrial from Rattus norvegicus (Rat).